The primary structure comprises 59 residues: SPbeta prophage-derived uncharacterized protein YosB (59 aa).

In Bacillus subtilis (strain 168), this protein is SPbeta prophage-derived uncharacterized protein YosB (yosB).